Consider the following 415-residue polypeptide: DNA double-strand break repair protein Mre11 (415 aa).

D10, H12, D51, and N86 together coordinate Mn(2+). Residue H87 is the Proton donor of the active site. Positions 174, 208, and 210 each coordinate Mn(2+).

This sequence belongs to the MRE11/RAD32 family. In terms of assembly, homodimer. Forms a heterotetramer composed of two Mre11 subunits and two Rad50 subunits. Mn(2+) serves as cofactor.

Its activity is regulated as follows. Nuclease activity is regulated by Rad50. Functionally, part of the Rad50/Mre11 complex, which is involved in the early steps of DNA double-strand break (DSB) repair. The complex may facilitate opening of the processed DNA ends to aid in the recruitment of HerA and NurA. Mre11 binds to DSB ends and has both double-stranded 3'-5' exonuclease activity and single-stranded endonuclease activity. In Pyrococcus abyssi (strain GE5 / Orsay), this protein is DNA double-strand break repair protein Mre11.